A 198-amino-acid chain; its full sequence is Ribosome maturation factor RimP (198 aa).

It belongs to the RimP family.

The protein resides in the cytoplasm. Its function is as follows. Required for maturation of 30S ribosomal subunits. The protein is Ribosome maturation factor RimP of Agrobacterium fabrum (strain C58 / ATCC 33970) (Agrobacterium tumefaciens (strain C58)).